Reading from the N-terminus, the 152-residue chain is Clitocypin-2 (152 aa).

Belongs to the protease inhibitor I48 family. In terms of assembly, homodimer. As to expression, expressed in all analyzed tissues, but expression was higher in the pileus and in the lower part of the stipe.

Binds and inhibits cysteine proteinases. Inhibits most strongly papain and cathepsin L, more weakly bromelain and cathepsin B while it is completely ineffective against cathepsin H. The protein is Clitocypin-2 (clt2) of Clitocybe nebularis (Clouded agaric).